Consider the following 423-residue polypeptide: Sphingomyelin phosphodiesterase 2 (423 aa).

E49 serves as a coordination point for Mg(2+). The Proton acceptor role is filled by H272. Helical transmembrane passes span 330–350 and 354–374; these read VIGL…GGGA and AILL…FYLF. The segment at 400–423 is disordered; it reads QDLGPEPQPALLLGQQEGDRTKEQ.

The protein belongs to the neutral sphingomyelinase family. It depends on Mg(2+) as a cofactor.

It is found in the cell membrane. The catalysed reaction is a sphingomyelin + H2O = phosphocholine + an N-acylsphing-4-enine + H(+). It catalyses the reaction an N-(acyl)-sphingosylphosphocholine + H2O = an N-acyl-sphingoid base + phosphocholine + H(+). The enzyme catalyses 1-O-octadecyl-sn-glycero-3-phosphocholine + H2O = 1-O-octadecyl-sn-glycerol + phosphocholine + H(+). It carries out the reaction 1-O-hexadecyl-sn-glycero-3-phosphocholine + H2O = 1-O-hexadecyl-sn-glycerol + phosphocholine + H(+). The catalysed reaction is 1-hexadecanoyl-sn-glycero-3-phosphocholine + H2O = 1-hexadecanoyl-sn-glycerol + phosphocholine + H(+). It catalyses the reaction a sphingosylphosphocholine + H2O = a sphingoid base + phosphocholine + H(+). The protein operates within lipid metabolism; sphingolipid metabolism. Its function is as follows. Catalyzes, at least in vitro, the hydrolysis of sphingomyelin to form ceramide and phosphocholine. Also hydrolyzes 1-O-alkyl-2-lyso-sn-glycero-3-phosphocholine (lyso-platelet-activating factor) in vivo. Also acts on 1-acyl-2-lyso-sn-glycero-3-phosphocholine (lyso-PC) and sphingosylphosphocholine. The protein is Sphingomyelin phosphodiesterase 2 of Homo sapiens (Human).